The chain runs to 513 residues: Na(+)/H(+) antiporter NhaB (513 aa).

The next 12 helical transmembrane spans lie at 23–43 (LALI…PFVA), 52–72 (IFTL…LLAI), 97–117 (LLLM…LFIF), 120–140 (LLLS…AAAF), 144–164 (FLDA…FYGI), 202–222 (LMMH…VGEP), 238–258 (FFLR…LTCL), 303–323 (AIIG…VGLI), 348–368 (TESL…AVII), 391–411 (LFYI…VGTI), 447–467 (ATPN…APLI), and 475–495 (VWMA…CVEF).

This sequence belongs to the NhaB Na(+)/H(+) (TC 2.A.34) antiporter family.

Its subcellular location is the cell inner membrane. The catalysed reaction is 2 Na(+)(in) + 3 H(+)(out) = 2 Na(+)(out) + 3 H(+)(in). Na(+)/H(+) antiporter that extrudes sodium in exchange for external protons. The sequence is that of Na(+)/H(+) antiporter NhaB from Shigella flexneri serotype 5b (strain 8401).